We begin with the raw amino-acid sequence, 236 residues long: Small ribosomal subunit protein mS41 (236 aa).

Belongs to the mitochondrion-specific ribosomal protein mS41 family. In terms of assembly, component of the mitochondrial small ribosomal subunit (mt-SSU). Mature N.crassa 74S mitochondrial ribosomes consist of a small (37S) and a large (54S) subunit. The 37S small subunit contains a 16S ribosomal RNA (16S mt-rRNA) and 32 different proteins. The 54S large subunit contains a 23S rRNA (23S mt-rRNA) and 42 different proteins.

Its subcellular location is the mitochondrion. Functionally, component of the mitochondrial ribosome (mitoribosome), a dedicated translation machinery responsible for the synthesis of mitochondrial genome-encoded proteins, including at least some of the essential transmembrane subunits of the mitochondrial respiratory chain. The mitoribosomes are attached to the mitochondrial inner membrane and translation products are cotranslationally integrated into the membrane. The protein is Small ribosomal subunit protein mS41 (fyv4) of Neurospora crassa (strain ATCC 24698 / 74-OR23-1A / CBS 708.71 / DSM 1257 / FGSC 987).